Here is a 102-residue protein sequence, read N- to C-terminus: Mitochondrial import inner membrane translocase subunit Tim10 B (102 aa).

The Twin CX3C motif signature appears at 27–51 (CFQRCVPSLHHRALDAEEEACLHSC). 2 disulfides stabilise this stretch: Cys27–Cys51 and Cys31–Cys47.

In terms of assembly, component of the TIM22 complex, which core is composed of TIMM22, associated with TIMM10 (TIMM10A and/or TIMM10B), TIMM9, AGK and TIMM29.

It localises to the mitochondrion inner membrane. Functionally, component of the TIM22 complex, a complex that mediates the import and insertion of multi-pass transmembrane proteins into the mitochondrial inner membrane. The TIM22 complex forms a twin-pore translocase that uses the membrane potential as the external driving force. In the TIM22 complex, it may act as a docking point for the soluble 70 kDa complex that guides the target proteins in transit through the aqueous mitochondrial intermembrane space. The chain is Mitochondrial import inner membrane translocase subunit Tim10 B (TIMM10B) from Pongo abelii (Sumatran orangutan).